The primary structure comprises 86 residues: Bradykinin-potentiating peptide 25.12 (86 aa).

The N-terminal stretch at 1-22 is a signal peptide; sequence MNKRVLLVIFFVTLLIADEVNS. The disordered stretch occupies residues 67–86; it reads APAAAAAPEEPPVEQRRRRR.

Belongs to the non-disulfide-bridged peptide (NDBP) superfamily. Long chain multifunctional peptide (group 2) family. In terms of tissue distribution, expressed by the venom gland.

The protein resides in the secreted. Its function is as follows. Inhibits angiotensin-converting enzyme (ACE), but does not serve as substrate for the enzyme. Potentiates bradykinin (BK) on the isolated guinea pig ileum as well as the isolated rat uterus for contraction. Also potentiates in vivo the depressor effect of BK on arterial blood pressure in the normotensive anesthetized rat. The polypeptide is Bradykinin-potentiating peptide 25.12 (Lychas mucronatus (Chinese swimming scorpion)).